The primary structure comprises 197 residues: Phospholipid hydroperoxide glutathione peroxidase (197 aa).

Serine 40 is modified (phosphoserine). Selenocysteine 73 is an active-site residue. Residue selenocysteine 73 is a non-standard amino acid, selenocysteine.

It belongs to the glutathione peroxidase family. In terms of assembly, monomer. Has a tendency to form higher mass oligomers. Interacts with FUNDC1; this interaction promotes GPX4 recruitment into mitochondria through TOM/TIM complex where it is degraded by mitophagy. As to expression, expressed very intensively in the testis and weakly in lung, heart, and cerebellum.

The protein resides in the mitochondrion. It is found in the cytoplasm. The enzyme catalyses a hydroperoxy polyunsaturated fatty acid + 2 glutathione = a hydroxy polyunsaturated fatty acid + glutathione disulfide + H2O. It carries out the reaction 2 glutathione + H2O2 = glutathione disulfide + 2 H2O. It catalyses the reaction tert-butyl hydroperoxide + 2 glutathione = tert-butanol + glutathione disulfide + H2O. The catalysed reaction is cumene hydroperoxide + 2 glutathione = 2-phenylpropan-2-ol + glutathione disulfide + H2O. The enzyme catalyses (9S)-hydroperoxy-(10E,12Z)-octadecadienoate + 2 glutathione = (9S)-hydroxy-(10E,12Z)-octadecadienoate + glutathione disulfide + H2O. It carries out the reaction (13S)-hydroperoxy-(9Z,11E)-octadecadienoate + 2 glutathione = (13S)-hydroxy-(9Z,11E)-octadecadienoate + glutathione disulfide + H2O. It catalyses the reaction (5S)-hydroperoxy-(6E,8Z,11Z,14Z)-eicosatetraenoate + 2 glutathione = (5S)-hydroxy-(6E,8Z,11Z,14Z)-eicosatetraenoate + glutathione disulfide + H2O. The catalysed reaction is (12R)-hydroperoxy-(5Z,8Z,10E,14Z)-eicosatetraenoate + 2 glutathione = (12R)-hydroxy-(5Z,8Z,10E,14Z)-eicosatetraenoate + glutathione disulfide + H2O. The enzyme catalyses (12S)-hydroperoxy-(5Z,8Z,10E,14Z)-eicosatetraenoate + 2 glutathione = (12S)-hydroxy-(5Z,8Z,10E,14Z)-eicosatetraenoate + glutathione disulfide + H2O. It carries out the reaction (15S)-hydroperoxy-(5Z,8Z,11Z,13E)-eicosatetraenoate + 2 glutathione = (15S)-hydroxy-(5Z,8Z,11Z,13E)-eicosatetraenoate + glutathione disulfide + H2O. It catalyses the reaction (5S)-hydroperoxy-(6E,8Z,11Z,14Z,17Z)-eicosapentaenoate + 2 glutathione = (5S)-hydroxy-(6E,8Z,11Z,14Z,17Z)-eicosapentaenoate + glutathione disulfide + H2O. The catalysed reaction is (12S)-hydroperoxy-(5Z,8Z,10E,14Z,17Z)-eicosapentaenoate + 2 glutathione = (12S)-hydroxy-(5Z,8Z,10E,14Z,17Z)-eicosapentaenoate + glutathione disulfide + H2O. The enzyme catalyses (15S)-hydroperoxy-(5Z,8Z,11Z,13E,17Z)-eicosapentaenoate + 2 glutathione = (15S)-hydroxy-(5Z,8Z,11Z,13E,17Z)-eicosapentaenoate + glutathione disulfide + H2O. It carries out the reaction (15S)-hydroperoxy-(11Z,13E)-eicosadienoate + 2 glutathione = (15S)-hydroxy-(11Z,13E)-eicosadienoate + glutathione disulfide + H2O. It catalyses the reaction (17S)-hydroperoxy-(4Z,7Z,10Z,13Z,15E,19Z)-docosahexaenoate + 2 glutathione = (17S)-hydroxy-(4Z,7Z,10Z,13Z,15E,19Z)-docosahexaenoate + glutathione disulfide + H2O. The catalysed reaction is a hydroperoxy-1,2-diacyl-glycero-3-phosphocholine + 2 glutathione = a hydroxy-1,2-diacyl-glycero-3-phosphocholine + glutathione disulfide + H2O. Essential antioxidant peroxidase that directly reduces phospholipid hydroperoxide even if they are incorporated in membranes and lipoproteins. Can also reduce fatty acid hydroperoxide, cholesterol hydroperoxide and thymine hydroperoxide. Plays a key role in protecting cells from oxidative damage by preventing membrane lipid peroxidation. Required to prevent cells from ferroptosis, a non-apoptotic cell death resulting from an iron-dependent accumulation of lipid reactive oxygen species. The presence of selenocysteine (Sec) versus Cys at the active site is essential for life: it provides resistance to overoxidation and prevents cells against ferroptosis. The presence of Sec at the active site is also essential for the survival of a specific type of parvalbumin-positive interneurons, thereby preventing against fatal epileptic seizures. May be required to protect cells from the toxicity of ingested lipid hydroperoxides. Required for normal sperm development and male fertility. Essential for maturation and survival of photoreceptor cells. Plays a role in a primary T-cell response to viral and parasitic infection by protecting T-cells from ferroptosis and by supporting T-cell expansion. Plays a role of glutathione peroxidase in platelets in the arachidonic acid metabolism. Reduces hydroperoxy ester lipids formed by a 15-lipoxygenase that may play a role as down-regulator of the cellular 15-lipoxygenase pathway. Can also reduce small soluble hydroperoxides such as H2O2, cumene hydroperoxide and tert-butyl hydroperoxide. This Macaca fuscata fuscata (Japanese macaque) protein is Phospholipid hydroperoxide glutathione peroxidase.